Reading from the N-terminus, the 1879-residue chain is Protein TIC 214 (1879 aa).

Helical transmembrane passes span 18 to 38 (IINS…FSIG), 64 to 84 (FITG…HLAL), 87 to 107 (PYTI…WTNP), 124 to 144 (LSIQ…HFIL), 172 to 192 (VGWL…LVWI), and 218 to 238 (IAPI…GRIP). Disordered regions lie at residues 245 to 305 (ETSK…IDET) and 586 to 702 (ISTS…DEPM). 2 stretches are compositionally biased toward acidic residues: residues 253 to 268 (AETE…EIET) and 295 to 305 (EKEDPDKIDET). Positions 586 to 688 (ISTSTPTSTP…SIPASTSTST (103 aa)) are enriched in low complexity. Positions 691 to 701 (IKSKDEPKDEP) are enriched in basic and acidic residues.

Belongs to the TIC214 family. As to quaternary structure, part of the Tic complex.

It localises to the plastid. The protein resides in the chloroplast inner membrane. Involved in protein precursor import into chloroplasts. May be part of an intermediate translocation complex acting as a protein-conducting channel at the inner envelope. The polypeptide is Protein TIC 214 (Cucumis sativus (Cucumber)).